The following is a 464-amino-acid chain: tRNA modification GTPase MnmE (464 aa).

3 residues coordinate (6S)-5-formyl-5,6,7,8-tetrahydrofolate: Arg-27, Glu-90, and Lys-129. Residues 222-384 (GVTLVLAGSV…LYDRIRSFIA (163 aa)) form the TrmE-type G domain. Residues 232–237 (NVGKSS), 251–257 (SSYAGTT), and 276–279 (DTAG) contribute to the GTP site. A Mg(2+)-binding site is contributed by Ser-236. Ser-251 serves as a coordination point for K(+). Thr-257 serves as a coordination point for Mg(2+). Lys-464 contacts (6S)-5-formyl-5,6,7,8-tetrahydrofolate.

This sequence belongs to the TRAFAC class TrmE-Era-EngA-EngB-Septin-like GTPase superfamily. TrmE GTPase family. As to quaternary structure, homodimer. Heterotetramer of two MnmE and two MnmG subunits. K(+) serves as cofactor.

It is found in the cytoplasm. Functionally, exhibits a very high intrinsic GTPase hydrolysis rate. Involved in the addition of a carboxymethylaminomethyl (cmnm) group at the wobble position (U34) of certain tRNAs, forming tRNA-cmnm(5)s(2)U34. The protein is tRNA modification GTPase MnmE of Borrelia recurrentis (strain A1).